The chain runs to 95 residues: PqqA binding protein (95 aa).

It belongs to the PqqD family. Monomer. Interacts with PqqE.

It participates in cofactor biosynthesis; pyrroloquinoline quinone biosynthesis. In terms of biological role, functions as a PqqA binding protein and presents PqqA to PqqE, in the pyrroloquinoline quinone (PQQ) biosynthetic pathway. The polypeptide is PqqA binding protein (Rahnella aquatilis).